A 270-amino-acid chain; its full sequence is Tryptophan synthase alpha chain (270 aa).

Residues glutamate 49 and aspartate 60 each act as proton acceptor in the active site.

The protein belongs to the TrpA family. In terms of assembly, tetramer of two alpha and two beta chains.

It catalyses the reaction (1S,2R)-1-C-(indol-3-yl)glycerol 3-phosphate + L-serine = D-glyceraldehyde 3-phosphate + L-tryptophan + H2O. Its pathway is amino-acid biosynthesis; L-tryptophan biosynthesis; L-tryptophan from chorismate: step 5/5. In terms of biological role, the alpha subunit is responsible for the aldol cleavage of indoleglycerol phosphate to indole and glyceraldehyde 3-phosphate. This is Tryptophan synthase alpha chain from Pseudomonas fluorescens (strain ATCC BAA-477 / NRRL B-23932 / Pf-5).